The following is a 335-amino-acid chain: Ethanol acetyltransferase 1 (335 aa).

The AB hydrolase-1 domain maps to 48–300 (PIVFVHGIFG…NSAHDILDQR (253 aa)). Catalysis depends on charge relay system residues Ser121, Asp145, and His294.

Belongs to the AB hydrolase superfamily.

It localises to the mitochondrion. It carries out the reaction ethanol + acetyl-CoA = ethyl acetate + CoA. It catalyses the reaction acetyl-CoA + H2O = acetate + CoA + H(+). The catalysed reaction is ethyl acetate + H2O = ethanol + acetate + H(+). Alcohol acetyltransferase that catalyzes the synthesis of ethyl acetate from ethanol and acetyl-CoA. Can also function as a thioesterase by hydrolyzing acetyl-CoA in the absence of ethanol, as well as esterase hydrolyzing ethyl acetate. This is Ethanol acetyltransferase 1 (EAT1) from Cyberlindnera fabianii (Yeast).